Here is a 313-residue protein sequence, read N- to C-terminus: Protein sprouty homolog 2 (313 aa).

The span at 1-14 (METRVQHGSGSQAL) shows a compositional bias: polar residues. Disordered regions lie at residues 1-31 (METR…PDLR) and 54-146 (EYTE…VADG). Composition is skewed to basic and acidic residues over residues 17–31 (ARRD…PDLR) and 78–89 (KSERPHGLPEHR). A compositionally biased stretch (low complexity) spans 108 to 131 (SRSISTVSTGSRSSTRTSTSSNSS). Over residues 132–141 (EQRLLGSSSG) the composition is skewed to polar residues. In terms of domain architecture, SPR spans 175–289 (RCEDCGKCKC…CYDRVNRPGC (115 aa)).

The protein belongs to the sprouty family. In terms of tissue distribution, brain and interlimb region.

The protein localises to the cytoplasm. It localises to the membrane. In terms of biological role, acts as an antagonist of FGF-induced retinal lens fiber differentiation. Inhibits TGFB-induced epithelial-to-mesenchymal transition in retinal lens epithelial cells. May play an important role in FGF-mediated patterning of the mid/hindbrain region by acting to modulate the signaling effects of FGF8. The sequence is that of Protein sprouty homolog 2 (SPRY2) from Gallus gallus (Chicken).